The chain runs to 257 residues: Small ribosomal subunit protein uS3 (257 aa).

One can recognise a KH type-2 domain in the interval I39–R112. The interval H217–N257 is disordered. The segment covering G234–R245 has biased composition (basic residues).

Belongs to the universal ribosomal protein uS3 family. Part of the 30S ribosomal subunit. Forms a tight complex with proteins S10 and S14.

Binds the lower part of the 30S subunit head. Binds mRNA in the 70S ribosome, positioning it for translation. The sequence is that of Small ribosomal subunit protein uS3 from Haploplasma axanthum (Acholeplasma axanthum).